The primary structure comprises 356 residues: Peptide chain release factor 1 (356 aa).

At Gln230 the chain carries N5-methylglutamine. The segment covering 279–289 (ALDSARSEARK) has biased composition (basic and acidic residues). The interval 279–299 (ALDSARSEARKSQVGSGDRSE) is disordered.

This sequence belongs to the prokaryotic/mitochondrial release factor family. Methylated by PrmC. Methylation increases the termination efficiency of RF1.

It localises to the cytoplasm. Peptide chain release factor 1 directs the termination of translation in response to the peptide chain termination codons UAG and UAA. The sequence is that of Peptide chain release factor 1 (prfA) from Caulobacter vibrioides (strain ATCC 19089 / CIP 103742 / CB 15) (Caulobacter crescentus).